The sequence spans 89 residues: Small ribosomal subunit protein bS20 (89 aa).

This sequence belongs to the bacterial ribosomal protein bS20 family.

In terms of biological role, binds directly to 16S ribosomal RNA. The chain is Small ribosomal subunit protein bS20 from Stenotrophomonas maltophilia (strain R551-3).